A 119-amino-acid chain; its full sequence is Large ribosomal subunit protein uL18 (119 aa).

It belongs to the universal ribosomal protein uL18 family. As to quaternary structure, part of the 50S ribosomal subunit; part of the 5S rRNA/L5/L18/L25 subcomplex. Contacts the 5S and 23S rRNAs.

This is one of the proteins that bind and probably mediate the attachment of the 5S RNA into the large ribosomal subunit, where it forms part of the central protuberance. In Lactobacillus delbrueckii subsp. bulgaricus (strain ATCC 11842 / DSM 20081 / BCRC 10696 / JCM 1002 / NBRC 13953 / NCIMB 11778 / NCTC 12712 / WDCM 00102 / Lb 14), this protein is Large ribosomal subunit protein uL18.